The primary structure comprises 304 residues: N-carbamoyl-D-amino acid hydrolase (304 aa).

Residues 5 to 276 form the CN hydrolase domain; the sequence is MILAVGQQGP…DEVITAAVCL (272 aa). Active-site residues include Glu-47, Lys-127, and Cys-172.

As to quaternary structure, homotetramer.

It catalyses the reaction an N-carbamoyl-D-amino acid + H2O + 2 H(+) = a D-alpha-amino acid + NH4(+) + CO2. With respect to regulation, the activity decreases with increasing concentration of H(2)O(2). Has 68% and 43% of activity remaining upon treatment with 0.1 and 0.2 mM H(2)O(2) for 30 minutes, respectively. Inhibited significantly by 2 mM Zn(2+), Cu(2+) and Ag(+), moderately by Co(2+), Mn(2+), Sn(2+) and Mg(2+), and only slightly by Ba(2+). Slightly activated by Fe(2+) and Ca(2+). No effect on activity by metal chelators EDTA and 8-hydroxyquinoline at 2 mM or by dithiothreitol, 2-mercaptoethanol or phenylmethanesulfonyl fluoride. Catalyzes the hydrolysis of N-carbamoyl-D-amino acids to the corresponding D-amino acids. Hydrolyzes aromatic and aliphatic N-carbamoyl-D-amino acids in vitro. Effectively hydrolyzes N-carbamoyl-D-p-hydroxyphenylglycine and N-carbamoyl-DL-p-hydroxyphenylglycine, and to a lesser extent N-carbamoyl-D-methionine. No activity for N-carbamoyl-L-amino acids, N-carbamoyl-beta-alanine or (RS)-alpha-ethyl-N-carbamoylphenylglycine in vitro. This Ensifer adhaerens (Sinorhizobium morelense) protein is N-carbamoyl-D-amino acid hydrolase.